The following is a 334-amino-acid chain: Heat-inducible transcription repressor HrcA (334 aa).

It belongs to the HrcA family.

In terms of biological role, negative regulator of class I heat shock genes (grpE-dnaK-dnaJ and groELS operons). Prevents heat-shock induction of these operons. The chain is Heat-inducible transcription repressor HrcA from Bordetella bronchiseptica (strain ATCC BAA-588 / NCTC 13252 / RB50) (Alcaligenes bronchisepticus).